The primary structure comprises 272 residues: Putative phosphoenolpyruvate synthase regulatory protein (272 aa).

152-159 serves as a coordination point for ADP; sequence GVSRCGKT.

The protein belongs to the pyruvate, phosphate/water dikinase regulatory protein family. PSRP subfamily.

The catalysed reaction is [pyruvate, water dikinase] + ADP = [pyruvate, water dikinase]-phosphate + AMP + H(+). It catalyses the reaction [pyruvate, water dikinase]-phosphate + phosphate + H(+) = [pyruvate, water dikinase] + diphosphate. Its function is as follows. Bifunctional serine/threonine kinase and phosphorylase involved in the regulation of the phosphoenolpyruvate synthase (PEPS) by catalyzing its phosphorylation/dephosphorylation. In Pseudomonas putida (strain GB-1), this protein is Putative phosphoenolpyruvate synthase regulatory protein.